The following is a 155-amino-acid chain: Endoribonuclease YbeY (155 aa).

Histidine 114, histidine 118, and histidine 124 together coordinate Zn(2+).

The protein belongs to the endoribonuclease YbeY family. Zn(2+) serves as cofactor.

It is found in the cytoplasm. Single strand-specific metallo-endoribonuclease involved in late-stage 70S ribosome quality control and in maturation of the 3' terminus of the 16S rRNA. This chain is Endoribonuclease YbeY, found in Escherichia coli O6:K15:H31 (strain 536 / UPEC).